We begin with the raw amino-acid sequence, 202 residues long: Superoxide dismutase [Mn/Fe] (202 aa).

Fe(3+) contacts are provided by H26, H80, D163, and H167. H26, H80, D163, and H167 together coordinate Mn(2+).

It belongs to the iron/manganese superoxide dismutase family. As to quaternary structure, homodimer. Requires Mn(2+) as cofactor. It depends on Fe(3+) as a cofactor.

It catalyses the reaction 2 superoxide + 2 H(+) = H2O2 + O2. In terms of biological role, destroys superoxide anion radicals which are normally produced within the cells and which are toxic to biological systems. Catalyzes the dismutation of superoxide anion radicals into O2 and H2O2 by successive reduction and oxidation of the transition metal ion at the active site. The chain is Superoxide dismutase [Mn/Fe] (sodB) from Methylomonas sp. (strain J).